We begin with the raw amino-acid sequence, 717 residues long: Transport/processing ATP-binding protein ComA (717 aa).

The 128-residue stretch at 11-138 folds into the Peptidase C39 domain; sequence QVDQMDCGVA…EEWTGVTLFM (128 aa). C17 is a catalytic residue. 6 helical membrane passes run 166–186, 205–225, 237–257, 282–302, 306–326, and 397–417; these read GLIA…IVGS, LGII…LSYA, LSID…MSFF, TILS…VLFS, NLFF…FAFM, and VAHL…VMDG. One can recognise an ABC transmembrane type-1 domain in the interval 168-450; it reads IANIVLATLL…IINLQTKLQT (283 aa). The ABC transporter domain occupies 484–717; it reads MTFKQVHYKY…GGFYAHLVNS (234 aa). 517–524 is an ATP binding site; it reads GISGSGKT.

This sequence belongs to the ABC transporter superfamily. Competence factor exporter (TC 3.A.1.112.1) family.

It is found in the cell membrane. Required for induction of competence. Seems to transport the competence-stimulating peptide (CSP). This chain is Transport/processing ATP-binding protein ComA (comA), found in Streptococcus pneumoniae serotype 4 (strain ATCC BAA-334 / TIGR4).